The sequence spans 480 residues: 6-phosphogluconate dehydrogenase, decarboxylating 1 (480 aa).

Residues 10-15 (GLAVMG), 33-35 (NRT), 77-79 (VKA), and asparagine 105 contribute to the NADP(+) site. Residues asparagine 105 and 131–133 (SGG) each bind substrate. Lysine 186 serves as the catalytic Proton acceptor. 189–190 (HN) provides a ligand contact to substrate. Catalysis depends on glutamate 193, which acts as the Proton donor. 5 residues coordinate substrate: tyrosine 194, lysine 264, arginine 291, arginine 450, and histidine 456.

This sequence belongs to the 6-phosphogluconate dehydrogenase family. Homodimer. Highly expressed in inflorescence, lowly expressed in root and embryos and almost absent in leaves.

The protein resides in the cytoplasm. It catalyses the reaction 6-phospho-D-gluconate + NADP(+) = D-ribulose 5-phosphate + CO2 + NADPH. It functions in the pathway carbohydrate degradation; pentose phosphate pathway; D-ribulose 5-phosphate from D-glucose 6-phosphate (oxidative stage): step 3/3. Functionally, catalyzes the oxidative decarboxylation of 6-phosphogluconate to ribulose 5-phosphate and CO(2), with concomitant reduction of NADP to NADPH. The protein is 6-phosphogluconate dehydrogenase, decarboxylating 1 (G6PGH1) of Oryza sativa subsp. japonica (Rice).